The following is a 175-amino-acid chain: ATP synthase subunit delta (175 aa).

It belongs to the ATPase delta chain family. In terms of assembly, F-type ATPases have 2 components, F(1) - the catalytic core - and F(0) - the membrane proton channel. F(1) has five subunits: alpha(3), beta(3), gamma(1), delta(1), epsilon(1). F(0) has three main subunits: a(1), b(2) and c(10-14). The alpha and beta chains form an alternating ring which encloses part of the gamma chain. F(1) is attached to F(0) by a central stalk formed by the gamma and epsilon chains, while a peripheral stalk is formed by the delta and b chains.

The protein localises to the cell membrane. Functionally, f(1)F(0) ATP synthase produces ATP from ADP in the presence of a proton or sodium gradient. F-type ATPases consist of two structural domains, F(1) containing the extramembraneous catalytic core and F(0) containing the membrane proton channel, linked together by a central stalk and a peripheral stalk. During catalysis, ATP synthesis in the catalytic domain of F(1) is coupled via a rotary mechanism of the central stalk subunits to proton translocation. Its function is as follows. This protein is part of the stalk that links CF(0) to CF(1). It either transmits conformational changes from CF(0) to CF(1) or is implicated in proton conduction. The polypeptide is ATP synthase subunit delta (Elusimicrobium minutum (strain Pei191)).